A 257-amino-acid chain; its full sequence is Ribonuclease HII (257 aa).

The RNase H type-2 domain maps to 72 to 257 (TYIAGIDEVG…FAPIKDMIQK (186 aa)). A divalent metal cation is bound by residues Asp78, Glu79, and Asp170.

This sequence belongs to the RNase HII family. It depends on Mn(2+) as a cofactor. Mg(2+) serves as cofactor.

The protein localises to the cytoplasm. The catalysed reaction is Endonucleolytic cleavage to 5'-phosphomonoester.. In terms of biological role, endonuclease that specifically degrades the RNA of RNA-DNA hybrids. The chain is Ribonuclease HII from Bacillus cereus (strain ZK / E33L).